The sequence spans 776 residues: Protein translocase subunit SecA 2 (776 aa).

ATP-binding positions include glutamine 80, 98 to 102 (GEGKT), and aspartate 486.

It belongs to the SecA family. In terms of assembly, monomer and homodimer. Part of the essential Sec protein translocation apparatus which comprises SecA, SecYEG and auxiliary proteins SecDF. Other proteins may also be involved.

It localises to the cell membrane. It is found in the cytoplasm. The catalysed reaction is ATP + H2O + cellular proteinSide 1 = ADP + phosphate + cellular proteinSide 2.. In terms of biological role, part of the Sec protein translocase complex. Interacts with the SecYEG preprotein conducting channel. Has a central role in coupling the hydrolysis of ATP to the transfer of proteins into and across the cell membrane, serving as an ATP-driven molecular motor driving the stepwise translocation of polypeptide chains across the membrane. The polypeptide is Protein translocase subunit SecA 2 (Listeria welshimeri serovar 6b (strain ATCC 35897 / DSM 20650 / CCUG 15529 / CIP 8149 / NCTC 11857 / SLCC 5334 / V8)).